The chain runs to 170 residues: Urease accessory protein UreE (170 aa).

The protein belongs to the UreE family.

It is found in the cytoplasm. In terms of biological role, involved in urease metallocenter assembly. Binds nickel. Probably functions as a nickel donor during metallocenter assembly. This chain is Urease accessory protein UreE, found in Helicobacter pylori (strain Shi470).